Here is a 525-residue protein sequence, read N- to C-terminus: Alpha-ketoglutaric semialdehyde dehydrogenase 2 (525 aa).

NAD(+) contacts are provided by residues Lys-185, Glu-188, and 242–247 (GSRQGG). Glu-266 serves as the catalytic Proton acceptor. Catalysis depends on Cys-303, which acts as the Nucleophile. Glu-394 is an NAD(+) binding site.

It belongs to the aldehyde dehydrogenase family. In terms of assembly, homodimer.

It carries out the reaction 2,5-dioxopentanoate + NADP(+) + H2O = 2-oxoglutarate + NADPH + 2 H(+). The catalysed reaction is 2,5-dioxopentanoate + NAD(+) + H2O = 2-oxoglutarate + NADH + 2 H(+). It participates in carbohydrate acid metabolism; D-glucarate degradation. It functions in the pathway carbohydrate acid metabolism; galactarate degradation. In terms of biological role, catalyzes the NAD(P)(+)-dependent oxidation of alpha-ketoglutaric semialdehyde (alphaKGSA) to alpha-ketoglutarate. Involved in D-glucarate/D-galactarate metabolism. Prefers NAD(+) to NADP(+) as a cosubstrate. This Azospirillum brasilense protein is Alpha-ketoglutaric semialdehyde dehydrogenase 2.